Reading from the N-terminus, the 309-residue chain is MARGADGGDGASVWQHVFLLPEYLKDDSKKMKSGLVFVKLANPCSGEGTIYLFNMCLPQLFEIKVFKEKNHSWFINESVQSGGLLHFATPVDPLFLLLHYLIKADKESFQGKFQPLDQVVMDDMFPDCILLLKLPELEKLLQHVTEEKEVDKKKYYKYSKEKTLKWLGKKVNQTMAALKTNKVNVSARVQSTAFFSGGQVSSDKDEDYVRYAHGLISDYIPKQLSDDLSKYLKLPEPPASVRNPPSKKAKLSDEPVMAKEDYTKFNSKDFKTVKKNSKMTAAQKALAKVDKSGMKSIDSFFGTKHVKKK.

Position 2 is an N-acetylalanine (Ala-2). Lys-295 carries the post-translational modification N6-acetyllysine. Ser-296 bears the Phosphoserine mark.

This sequence belongs to the RNase H2 subunit B family. As to quaternary structure, the RNase H2 complex is a heterotrimer composed of the catalytic subunit RNASEH2A and the non-catalytic subunits RNASEH2B and RNASEH2C.

The protein localises to the nucleus. Functionally, non catalytic subunit of RNase H2, an endonuclease that specifically degrades the RNA of RNA:DNA hybrids. Participates in DNA replication, possibly by mediating the removal of lagging-strand Okazaki fragment RNA primers during DNA replication. Mediates the excision of single ribonucleotides from DNA:RNA duplexes. This Bos taurus (Bovine) protein is Ribonuclease H2 subunit B (RNASEH2B).